Here is a 253-residue protein sequence, read N- to C-terminus: Triosephosphate isomerase (253 aa).

12-14 (NWK) lines the substrate pocket. Catalysis depends on H100, which acts as the Electrophile. E170 serves as the catalytic Proton acceptor. Residues G176, S215, and 236-237 (GG) contribute to the substrate site.

Belongs to the triosephosphate isomerase family. Homodimer.

The protein localises to the cytoplasm. The enzyme catalyses D-glyceraldehyde 3-phosphate = dihydroxyacetone phosphate. The protein operates within carbohydrate biosynthesis; gluconeogenesis. It functions in the pathway carbohydrate degradation; glycolysis; D-glyceraldehyde 3-phosphate from glycerone phosphate: step 1/1. Functionally, involved in the gluconeogenesis. Catalyzes stereospecifically the conversion of dihydroxyacetone phosphate (DHAP) to D-glyceraldehyde-3-phosphate (G3P). The polypeptide is Triosephosphate isomerase (Rhodopseudomonas palustris (strain BisA53)).